A 278-amino-acid polypeptide reads, in one-letter code: Phosphatidylglycerol--prolipoprotein diacylglyceryl transferase (278 aa).

3 helical membrane-spanning segments follow: residues leucine 13–valine 33, valine 50–valine 70, and asparagine 89–threonine 109. Arginine 135 serves as a coordination point for a 1,2-diacyl-sn-glycero-3-phospho-(1'-sn-glycerol). The next 3 helical transmembrane spans lie at glutamine 175 to leucine 195, glycine 205 to leucine 225, and isoleucine 236 to valine 256.

Belongs to the Lgt family.

Its subcellular location is the cell membrane. It carries out the reaction L-cysteinyl-[prolipoprotein] + a 1,2-diacyl-sn-glycero-3-phospho-(1'-sn-glycerol) = an S-1,2-diacyl-sn-glyceryl-L-cysteinyl-[prolipoprotein] + sn-glycerol 1-phosphate + H(+). It participates in protein modification; lipoprotein biosynthesis (diacylglyceryl transfer). In terms of biological role, catalyzes the transfer of the diacylglyceryl group from phosphatidylglycerol to the sulfhydryl group of the N-terminal cysteine of a prolipoprotein, the first step in the formation of mature lipoproteins. The sequence is that of Phosphatidylglycerol--prolipoprotein diacylglyceryl transferase from Enterococcus faecalis (strain ATCC 700802 / V583).